Consider the following 710-residue polypeptide: Polyribonucleotide nucleotidyltransferase (710 aa).

Positions 501 and 507 each coordinate Mg(2+). Residues 568-628 (PKVQMFQIKP…ETVKQAILFI (61 aa)) enclose the KH domain. The S1 motif domain maps to 638 to 710 (NSIYHAHISR…RIDFVLISKK (73 aa)).

Belongs to the polyribonucleotide nucleotidyltransferase family. Mg(2+) is required as a cofactor.

Its subcellular location is the cytoplasm. The enzyme catalyses RNA(n+1) + phosphate = RNA(n) + a ribonucleoside 5'-diphosphate. Functionally, involved in mRNA degradation. Catalyzes the phosphorolysis of single-stranded polyribonucleotides processively in the 3'- to 5'-direction. The sequence is that of Polyribonucleotide nucleotidyltransferase from Phytoplasma australiense.